Here is a 187-residue protein sequence, read N- to C-terminus: Ribosome-recycling factor (187 aa).

The protein belongs to the RRF family.

The protein resides in the cytoplasm. Functionally, responsible for the release of ribosomes from messenger RNA at the termination of protein biosynthesis. May increase the efficiency of translation by recycling ribosomes from one round of translation to another. The chain is Ribosome-recycling factor from Bradyrhizobium sp. (strain ORS 278).